We begin with the raw amino-acid sequence, 206 residues long: uncharacterized protein (206 aa).

The chain crosses the membrane as a helical span at residues 21 to 43 (VPINITMSICALTALLKSYSITG).

The protein localises to the membrane. This is an uncharacterized protein from Acanthamoeba polyphaga (Amoeba).